A 69-amino-acid polypeptide reads, in one-letter code: Large ribosomal subunit protein uL29 (69 aa).

Belongs to the universal ribosomal protein uL29 family.

This is Large ribosomal subunit protein uL29 from Methylobacillus flagellatus (strain ATCC 51484 / DSM 6875 / VKM B-1610 / KT).